Consider the following 848-residue polypeptide: Protein translocase subunit SecA (848 aa).

Residues Gln86, 104–108, and Asp508 each bind ATP; that span reads GEGKT. Cys833, Cys835, Cys844, and Cys845 together coordinate Zn(2+).

The protein belongs to the SecA family. In terms of assembly, monomer and homodimer. Part of the essential Sec protein translocation apparatus which comprises SecA, SecYEG and auxiliary proteins SecDF. Other proteins may also be involved. Zn(2+) serves as cofactor.

It localises to the cell membrane. It is found in the cytoplasm. It catalyses the reaction ATP + H2O + cellular proteinSide 1 = ADP + phosphate + cellular proteinSide 2.. Functionally, part of the Sec protein translocase complex. Interacts with the SecYEG preprotein conducting channel. Has a central role in coupling the hydrolysis of ATP to the transfer of proteins into and across the cell membrane, serving as an ATP-driven molecular motor driving the stepwise translocation of polypeptide chains across the membrane. The protein is Protein translocase subunit SecA of Caldicellulosiruptor saccharolyticus (strain ATCC 43494 / DSM 8903 / Tp8T 6331).